A 609-amino-acid polypeptide reads, in one-letter code: Replication protein E1 (609 aa).

The short motif at 81–83 (KRK) is the Nuclear localization signal element. Phosphoserine; by host is present on residues Ser-87 and Ser-94. A Nuclear export signal motif is present at residues 93 to 102 (LSPRLQSITI). Positions 149 to 312 (QGAKGLGIVK…TMINHQSAEA (164 aa)) are DNA-binding region. Residues 411–561 (INFIRFLDVF…FPFDSNNKPQ (151 aa)) enclose the SF3 helicase domain. Position 437–444 (437–444 (GPPDTGKS)) interacts with ATP. Residue Lys-518 forms a Glycyl lysine isopeptide (Lys-Gly) (interchain with G-Cter in SUMO) linkage. Positions 584-609 (DQEDEGDDGHTQRSFQCTAREPNGHL) are disordered.

The protein belongs to the papillomaviridae E1 protein family. In terms of assembly, can form hexamers. Interacts with E2 protein; this interaction increases E1 DNA binding specificity. Interacts with host DNA polymerase subunit POLA2. Interacts with host single stranded DNA-binding protein RPA1. Interacts with host TOP1; this interaction stimulates the enzymatic activity of TOP1. In terms of processing, phosphorylated. Post-translationally, sumoylated.

Its subcellular location is the host nucleus. It catalyses the reaction Couples ATP hydrolysis with the unwinding of duplex DNA by translocating in the 3'-5' direction.. The catalysed reaction is ATP + H2O = ADP + phosphate + H(+). Functionally, ATP-dependent DNA 3'-5' helicase required for initiation of viral DNA replication. It forms a complex with the viral E2 protein. The E1-E2 complex binds to the replication origin which contains binding sites for both proteins. During the initial step, a dimer of E1 interacts with a dimer of protein E2 leading to a complex that binds the viral origin of replication with high specificity. Then, a second dimer of E1 displaces the E2 dimer in an ATP-dependent manner to form the E1 tetramer. Following this, two E1 monomers are added to each half of the site, which results in the formation of two E1 trimers on the viral ori. Subsequently, two hexamers will be created. The double hexamer acts as a bi-directional helicase machinery and unwinds the viral DNA and then recruits the host DNA polymerase to start replication. The chain is Replication protein E1 from Human papillomavirus 37.